Consider the following 160-residue polypeptide: Small RNA binding protein 1 (160 aa).

Positions 8 to 86 (FRCFVGGLAW…RNITVNEAQQ (79 aa)) constitute an RRM domain. Residues 82 to 160 (NEAQQRGGGG…GGGSEGGWRN (79 aa)) form a disordered region. Positions 87–160 (RGGGGGGGYN…GGGSEGGWRN (74 aa)) are enriched in gly residues. The tract at residues 88–157 (GGGGGGGYNR…GSGGGGSEGG (70 aa)) is glycine-rich (GR) required for cell-to-cell movement.

The protein belongs to the GR-RBP family. As to quaternary structure, binds to small phloem-mobile single-stranded RNAs (ss-sRNA, e.g. small interfering RNA (siRNA) and microRNA (miRNA)) in the phloeme exudate, including viral-derived sRNA (vsiRNA). In terms of tissue distribution, accumulates in phloem exudates.

Its subcellular location is the secreted. Functionally, possibly has a role in RNA transcription or processing during stress. Binds sequence non-specifically to RNAs and DNAs. Mediates cell-to-cell trafficking of RNA interference (RNAi) signals (small RNAs (sRNA), e.g. small interfering RNA (siRNA) and microRNA (miRNA)) which regulate growth and development, as well as responses to environmental inputs, including pathogen attack; can compromise zucchini yellow mosaic virus (ZYMV) and tobacco rattle virus (TRV) infections at the early stage. The polypeptide is Small RNA binding protein 1 (Cucumis sativus (Cucumber)).